The primary structure comprises 305 residues: Undecaprenyl-diphosphatase (305 aa).

Transmembrane regions (helical) follow at residues 18 to 38, 55 to 75, 103 to 123, 130 to 150, 187 to 207, 225 to 245, 246 to 266, and 284 to 304; these read GVTELFPVSSLGHAVLVPALV, YLAFIVGLHVATAAALLVFFW, WLIVVGTIPVGLAGLALEQLF, PVPAAAFLLLNGVALYAGEVL, GVLIGAAQILALLPGISRSGI, FSFLLATPIILAAGVYKIPEL, FGPLGAGIGGQVLAGSIASFV, and LTPFAIYCAVAGGASLVWLAL.

Belongs to the UppP family.

The protein localises to the cell membrane. The catalysed reaction is di-trans,octa-cis-undecaprenyl diphosphate + H2O = di-trans,octa-cis-undecaprenyl phosphate + phosphate + H(+). In terms of biological role, catalyzes the dephosphorylation of undecaprenyl diphosphate (UPP). Confers resistance to bacitracin. The protein is Undecaprenyl-diphosphatase of Mycolicibacterium paratuberculosis (strain ATCC BAA-968 / K-10) (Mycobacterium paratuberculosis).